The following is a 251-amino-acid chain: Retinoic acid early-inducible protein 1-epsilon (251 aa).

Residues 1–28 (MAKAAVTKRHHFMIQKLLILLSYGYTNG) form the signal peptide. Residues cysteine 37 and cysteine 56 are joined by a disulfide bond. Residues asparagine 38, asparagine 70, asparagine 83, asparagine 141, and asparagine 154 are each glycosylated (N-linked (GlcNAc...) asparagine). A disulfide bridge connects residues cysteine 88 and cysteine 188. The interval 196–228 (LKQSKEKPRSTSRSPSITQLTSTSPLPPPSHST) is disordered. Low complexity predominate over residues 209–219 (SPSITQLTSTS). Serine 225 carries GPI-anchor amidated serine lipidation. Positions 226–251 (HSTSKKGFISVGLIFISLLFAFAFAM) are cleaved as a propeptide — removed in mature form.

The protein belongs to the NKG2D ligand family. Post-translationally, glycosylated.

Its subcellular location is the cell membrane. Acts as a ligand for KLRK1. The polypeptide is Retinoic acid early-inducible protein 1-epsilon (Raet1e) (Mus musculus (Mouse)).